Here is a 300-residue protein sequence, read N- to C-terminus: ClpXP adapter protein SpxH (300 aa).

It belongs to the SpxH family. In terms of assembly, interacts with Spx.

The protein resides in the cytoplasm. Its function is as follows. Adapter protein required for efficient degradation of Spx by ClpXP under non-stress conditions. Interaction with Spx stabilizes Spx and exposes the C-terminus of Spx for recognition and proteolysis by ClpXP. This Shouchella clausii (strain KSM-K16) (Alkalihalobacillus clausii) protein is ClpXP adapter protein SpxH.